Consider the following 554-residue polypeptide: Protein SINE2 (554 aa).

Residues 17–290 (DKDPDSHKTA…MAAHETMRQA (274 aa)) form an ARMADILLO-type fold region. 3 disordered regions span residues 306–332 (CKPR…VYSR), 411–442 (NESV…KHHR), and 465–487 (ETSS…TTED). Over residues 311-321 (SLSGSVKSTSS) the composition is skewed to low complexity. Residues 322-332 (LREHDGSVYSR) are compositionally biased toward basic and acidic residues. Basic residues predominate over residues 419-431 (NRSRSSRRNTKKR). Low complexity predominate over residues 465-485 (ETSSSSSIYDTSGTTTPTNTT). The KASH domain occupies 509 to 554 (LDPRLGRSKGVLKLGLSVFSIAVAGFASFMWMYLQDDMMPPHLVPT). A helical membrane pass occupies residues 522–542 (LGLSVFSIAVAGFASFMWMYL). The Required for nuclear localization motif lies at 551–554 (LVPT).

Interacts with SUN1 and SUN2. Expressed in epidermal cells, mesophyll cells, trichomes and root cells.

The protein localises to the nucleus membrane. Plays a role in innate immunity against the oomycete pathogen A.arabidopsidis (Hpa). In Arabidopsis thaliana (Mouse-ear cress), this protein is Protein SINE2.